The sequence spans 777 residues: Degenerin unc-8 (777 aa).

Topologically, residues 1–128 (MSPLLTWNLI…VATSSFFGRY (128 aa)) are cytoplasmic. Residues 129–149 (VWAALFMCMLMAFLLQTYWTM) form a helical membrane-spanning segment. Residues 150 to 689 (SEYLQYRTII…KETAGYTLVN (540 aa)) lie on the Extracellular side of the membrane. N-linked (GlcNAc...) asparagine glycans are attached at residues Asn-274, Asn-319, Asn-357, Asn-411, Asn-453, Asn-533, and Asn-597. A helical membrane pass occupies residues 690–710 (LFSDFGGNIGLWIGFSVITFA). Residues 711 to 777 (EFAELFCEIC…NESTKELMSK (67 aa)) are Cytoplasmic-facing. The segment at 752–777 (QRSPKKSQPGEDEVSTNESTKELMSK) is disordered.

This sequence belongs to the amiloride-sensitive sodium channel (TC 1.A.6) family.

It is found in the membrane. In terms of biological role, sodium permeable non-voltage-sensitive ion channel. Involved in the activity-dependent removal of selected presynaptic proteins, such as synaptobrevin snb-1, and Ras-related rab-3, in the remodeling of GABAergic motor neurons. This Caenorhabditis elegans protein is Degenerin unc-8.